Reading from the N-terminus, the 129-residue chain is Follitropin subunit beta (129 aa).

Residues 1–20 form the signal peptide; sequence MKTLQFFFLFCCWKAICCNS. Intrachain disulfides connect Cys-21–Cys-69, Cys-35–Cys-84, Cys-38–Cys-122, Cys-46–Cys-100, Cys-50–Cys-102, and Cys-105–Cys-112. Residues Asn-25 and Asn-42 are each glycosylated (N-linked (GlcNAc...) asparagine).

Belongs to the glycoprotein hormones subunit beta family. As to quaternary structure, heterodimer. The active follitropin is a heterodimer composed of an alpha chain/CGA shared with other hormones and a unique beta chain/FSHB shown here.

It is found in the secreted. Together with the alpha chain CGA constitutes follitropin, the follicle-stimulating hormone, and provides its biological specificity to the hormone heterodimer. Binds FSHR, a G protein-coupled receptor, on target cells to activate downstream signaling pathways. Follitropin is involved in follicle development and spermatogenesis in reproductive organs. The polypeptide is Follitropin subunit beta (FSHB) (Gorilla gorilla gorilla (Western lowland gorilla)).